A 329-amino-acid polypeptide reads, in one-letter code: Legumin type B (329 aa).

Disordered stretches follow at residues 47–79 and 97–149; these read PETQ…EDGN and EEDT…GRNG. The segment covering 99-112 has biased composition (basic and acidic residues); it reads DTAKRLRSPRDKRN. Acidic residues predominate over residues 129–138; the sequence is QQEEEEEEEE. In terms of domain architecture, Cupin type-1 spans 161-308; sequence ENIAQPARAD…AFGLRQRQVT (148 aa).

It belongs to the 11S seed storage protein (globulins) family. Hexamer; each subunit is composed of an acidic and a basic chain derived from a single precursor and linked by a disulfide bond.

Its function is as follows. This protein found in the seeds of many leguminous and non-leguminous plants is the source of sulfur-containing amino acids in seed meals. The protein is Legumin type B (LEB6) of Vicia faba (Broad bean).